A 349-amino-acid polypeptide reads, in one-letter code: Hydroxymethylglutaryl-CoA synthase (349 aa).

Residues Asp-29 and Ala-30 each coordinate (3S)-3-hydroxy-3-methylglutaryl-CoA. Glu-81 serves as the catalytic Proton donor/acceptor. Residues Cys-113 and Thr-154 each contribute to the (3S)-3-hydroxy-3-methylglutaryl-CoA site. Residue Cys-113 is the Acyl-thioester intermediate of the active site. CoA is bound at residue Arg-202. Residues Thr-204 and His-237 each contribute to the (3S)-3-hydroxy-3-methylglutaryl-CoA site. His-237 acts as the Proton donor/acceptor in catalysis. Lys-242 contributes to the CoA binding site. (3S)-3-hydroxy-3-methylglutaryl-CoA is bound by residues Lys-246, Asn-269, and Ser-299.

The protein belongs to the thiolase-like superfamily. Archaeal HMG-CoA synthase family. As to quaternary structure, interacts with acetoacetyl-CoA thiolase that catalyzes the precedent step in the pathway and with a DUF35 protein. The acetoacetyl-CoA thiolase/HMG-CoA synthase complex channels the intermediate via a fused CoA-binding site, which allows for efficient coupling of the endergonic thiolase reaction with the exergonic HMGCS reaction.

It catalyses the reaction acetoacetyl-CoA + acetyl-CoA + H2O = (3S)-3-hydroxy-3-methylglutaryl-CoA + CoA + H(+). It functions in the pathway metabolic intermediate biosynthesis; (R)-mevalonate biosynthesis; (R)-mevalonate from acetyl-CoA: step 2/3. Catalyzes the condensation of acetyl-CoA with acetoacetyl-CoA to form 3-hydroxy-3-methylglutaryl-CoA (HMG-CoA). Functions in the mevalonate (MVA) pathway leading to isopentenyl diphosphate (IPP), a key precursor for the biosynthesis of isoprenoid compounds that are building blocks of archaeal membrane lipids. In Methanosarcina mazei (strain ATCC BAA-159 / DSM 3647 / Goe1 / Go1 / JCM 11833 / OCM 88) (Methanosarcina frisia), this protein is Hydroxymethylglutaryl-CoA synthase.